A 368-amino-acid chain; its full sequence is Quinolinate synthase (368 aa).

Residues H46 and S63 each coordinate iminosuccinate. A [4Fe-4S] cluster-binding site is contributed by C110. Iminosuccinate is bound by residues 141–143 (YVN) and S162. C230 serves as a coordination point for [4Fe-4S] cluster. Iminosuccinate-binding positions include 256-258 (HPE) and T273. Residue C320 participates in [4Fe-4S] cluster binding.

It belongs to the quinolinate synthase family. Type 3 subfamily. The cofactor is [4Fe-4S] cluster.

It is found in the cytoplasm. It carries out the reaction iminosuccinate + dihydroxyacetone phosphate = quinolinate + phosphate + 2 H2O + H(+). It participates in cofactor biosynthesis; NAD(+) biosynthesis; quinolinate from iminoaspartate: step 1/1. Its function is as follows. Catalyzes the condensation of iminoaspartate with dihydroxyacetone phosphate to form quinolinate. The sequence is that of Quinolinate synthase from Bacillus thuringiensis (strain Al Hakam).